We begin with the raw amino-acid sequence, 122 residues long: Cytochrome b-c1 complex subunit 7-1, mitochondrial (122 aa).

Belongs to the UQCRB/QCR7 family. In terms of assembly, component of the ubiquinol-cytochrome c oxidoreductase (cytochrome b-c1 complex, complex III, CIII), a multisubunit enzyme composed of 10 subunits. The complex is composed of 3 respiratory subunits cytochrome b (MT-CYB), cytochrome c1 (CYC1-1 or CYC1-2) and Rieske protein (UCR1-1 or UCR1-2), 2 core protein subunits MPPalpha1 (or MPPalpha2) and MPPB, and 5 low-molecular weight protein subunits QCR7-1 (or QCR7-2), UCRQ-1 (or UCRQ-2), QCR9, UCRY and probably QCR6-1 (or QCR6-2). The complex exists as an obligatory dimer and forms supercomplexes (SCs) in the inner mitochondrial membrane with NADH-ubiquinone oxidoreductase (complex I, CI), resulting in different assemblies (supercomplexes SCI(1)III(2) and SCI(2)III(4)).

It is found in the mitochondrion inner membrane. In terms of biological role, component of the ubiquinol-cytochrome c oxidoreductase, a multisubunit transmembrane complex that is part of the mitochondrial electron transport chain which drives oxidative phosphorylation. The respiratory chain contains 3 multisubunit complexes succinate dehydrogenase (complex II, CII), ubiquinol-cytochrome c oxidoreductase (cytochrome b-c1 complex, complex III, CIII) and cytochrome c oxidase (complex IV, CIV), that cooperate to transfer electrons derived from NADH and succinate to molecular oxygen, creating an electrochemical gradient over the inner membrane that drives transmembrane transport and the ATP synthase. The cytochrome b-c1 complex catalyzes electron transfer from ubiquinol to cytochrome c, linking this redox reaction to translocation of protons across the mitochondrial inner membrane, with protons being carried across the membrane as hydrogens on the quinol. In the process called Q cycle, 2 protons are consumed from the matrix, 4 protons are released into the intermembrane space and 2 electrons are passed to cytochrome c. The polypeptide is Cytochrome b-c1 complex subunit 7-1, mitochondrial (QCR7-1) (Arabidopsis thaliana (Mouse-ear cress)).